The following is a 330-amino-acid chain: tRNA U34 carboxymethyltransferase (330 aa).

Residues Lys91, Trp105, Lys110, Gly130, 152 to 154 (DPS), 181 to 182 (IE), Met196, Tyr200, and Arg315 contribute to the carboxy-S-adenosyl-L-methionine site.

It belongs to the class I-like SAM-binding methyltransferase superfamily. CmoB family. In terms of assembly, homotetramer.

It carries out the reaction carboxy-S-adenosyl-L-methionine + 5-hydroxyuridine(34) in tRNA = 5-carboxymethoxyuridine(34) in tRNA + S-adenosyl-L-homocysteine + H(+). Its function is as follows. Catalyzes carboxymethyl transfer from carboxy-S-adenosyl-L-methionine (Cx-SAM) to 5-hydroxyuridine (ho5U) to form 5-carboxymethoxyuridine (cmo5U) at position 34 in tRNAs. The sequence is that of tRNA U34 carboxymethyltransferase from Shewanella woodyi (strain ATCC 51908 / MS32).